We begin with the raw amino-acid sequence, 579 residues long: Sulfite reductase [NADPH] hemoprotein beta-component (579 aa).

Residues cysteine 434, cysteine 440, cysteine 479, and cysteine 483 each contribute to the [4Fe-4S] cluster site. Cysteine 483 contributes to the siroheme binding site.

Belongs to the nitrite and sulfite reductase 4Fe-4S domain family. Alpha(8)-beta(8). The alpha component is a flavoprotein, the beta component is a hemoprotein. The cofactor is siroheme. [4Fe-4S] cluster serves as cofactor.

It carries out the reaction hydrogen sulfide + 3 NADP(+) + 3 H2O = sulfite + 3 NADPH + 4 H(+). Its pathway is sulfur metabolism; hydrogen sulfide biosynthesis; hydrogen sulfide from sulfite (NADPH route): step 1/1. In terms of biological role, component of the sulfite reductase complex that catalyzes the 6-electron reduction of sulfite to sulfide. This is one of several activities required for the biosynthesis of L-cysteine from sulfate. The sequence is that of Sulfite reductase [NADPH] hemoprotein beta-component from Salmonella choleraesuis (strain SC-B67).